Consider the following 746-residue polypeptide: Proline--tRNA ligase (746 aa).

A required for editing of incorrectly charged tRNA region spans residues 1–223 (MNNNTNGEII…NSNNNNNNNN (223 aa)). Positions 181 to 201 (TSKARVDKKEDVQEEMAKNEE) are enriched in basic and acidic residues. The interval 181 to 226 (TSKARVDKKEDVQEEMAKNEELQNNNNNNKNNSNSNNNNNNNNNHI) is disordered. Residues 204–224 (NNNNNNKNNSNSNNNNNNNNN) show a composition bias toward low complexity. Arginine 390 is a binding site for L-proline. Residues 390 to 394 (RWEFK), 401 to 405 (RTREF), and 475 to 477 (QAA) contribute to the ATP site. Position 480 (histidine 480) interacts with L-proline. An ATP-binding site is contributed by 512 to 514 (TTR).

Belongs to the class-II aminoacyl-tRNA synthetase family. ProS type 3 subfamily. In terms of assembly, homodimer.

The protein localises to the cytoplasm. It catalyses the reaction tRNA(Pro) + L-proline + ATP = L-prolyl-tRNA(Pro) + AMP + diphosphate. Its activity is regulated as follows. Inhibited by the quinazolinone-based compound febrifugine from the Chinese plant Dichroa febrifuga which is used to treat malaria-associated fever. Also inhibited by febrifugine derivatives such as halofuginone. Its function is as follows. Catalyzes the attachment of proline to tRNA(Pro) in a two-step reaction: proline is first activated by ATP to form Pro-AMP and then transferred to the acceptor end of tRNA(Pro). Functions in trans to edit the amino acid moiety from incorrectly charged Ala-tRNA(Pro). Has no activity on correctly charged Pro-tRNA(Pro) or Ala-tRNA(Ala). The chain is Proline--tRNA ligase from Plasmodium falciparum (isolate 3D7).